The primary structure comprises 103 residues: Iron-sulfur cluster assembly protein CyaY (103 aa).

Belongs to the frataxin family.

Involved in iron-sulfur (Fe-S) cluster assembly. May act as a regulator of Fe-S biogenesis. The sequence is that of Iron-sulfur cluster assembly protein CyaY from Rickettsia africae (strain ESF-5).